A 131-amino-acid chain; its full sequence is uncharacterized protein (131 aa).

This is an uncharacterized protein from Homo sapiens (Human).